Here is a 400-residue protein sequence, read N- to C-terminus: Large envelope protein (400 aa).

M1 carries the post-translational modification N-acetylmethionine. Residue G2 is the site of N-myristoyl glycine; by host attachment. Positions G2 to A119 are pre-S1. The interval G2–N174 is pre-S. At G2 to G181 the chain is on the virion surface; in external conformation side. The Intravirion; in internal conformation portion of the chain corresponds to G2 to R253. N-linked (GlcNAc...) asparagine glycosylation occurs at P4. Positions V84–D114 are disordered. The tract at residues M120–N174 is pre-S2. Residues L182–I202 traverse the membrane as a helical segment. Residues P203 to R253 are Intravirion; in external conformation-facing. The chain crosses the membrane as a helical span at residues F254–Y274. At Q275 to S348 the chain is on the virion surface side. A glycan (N-linked (GlcNAc...) asparagine; by host) is linked at N320. The chain crosses the membrane as a helical span at residues L349–I369. Over W370–W375 the chain is Intravirion. A helical membrane pass occupies residues G376 to V398. Residues S399–I400 lie on the Virion surface side of the membrane.

It belongs to the orthohepadnavirus major surface antigen family. In terms of assembly, in its internal form (Li-HBsAg), interacts with the capsid protein and with the isoform S. Interacts with host chaperone CANX. Associates with host chaperone CANX through its pre-S2 N glycan; this association may be essential for isoform M proper secretion. As to quaternary structure, interacts with isoform L. Interacts with the antigens of satellite virus HDV (HDVAgs); this interaction is required for encapsidation of HDV genomic RNA. Isoform M is N-terminally acetylated by host at a ratio of 90%, and N-glycosylated by host at the pre-S2 region. In terms of processing, myristoylated.

Its subcellular location is the virion membrane. Functionally, the large envelope protein exists in two topological conformations, one which is termed 'external' or Le-HBsAg and the other 'internal' or Li-HBsAg. In its external conformation the protein attaches the virus to cell receptors and thereby initiating infection. This interaction determines the species specificity and liver tropism. This attachment induces virion internalization predominantly through caveolin-mediated endocytosis. The large envelope protein also assures fusion between virion membrane and endosomal membrane. In its internal conformation the protein plays a role in virion morphogenesis and mediates the contact with the nucleocapsid like a matrix protein. The middle envelope protein plays an important role in the budding of the virion. It is involved in the induction of budding in a nucleocapsid independent way. In this process the majority of envelope proteins bud to form subviral lipoprotein particles of 22 nm of diameter that do not contain a nucleocapsid. This Homo sapiens (Human) protein is Large envelope protein.